A 211-amino-acid polypeptide reads, in one-letter code: ATP phosphoribosyltransferase (211 aa).

Belongs to the ATP phosphoribosyltransferase family. Short subfamily. In terms of assembly, heteromultimer composed of HisG and HisZ subunits.

The protein resides in the cytoplasm. The enzyme catalyses 1-(5-phospho-beta-D-ribosyl)-ATP + diphosphate = 5-phospho-alpha-D-ribose 1-diphosphate + ATP. Its pathway is amino-acid biosynthesis; L-histidine biosynthesis; L-histidine from 5-phospho-alpha-D-ribose 1-diphosphate: step 1/9. Catalyzes the condensation of ATP and 5-phosphoribose 1-diphosphate to form N'-(5'-phosphoribosyl)-ATP (PR-ATP). Has a crucial role in the pathway because the rate of histidine biosynthesis seems to be controlled primarily by regulation of HisG enzymatic activity. This chain is ATP phosphoribosyltransferase, found in Pseudomonas putida (strain GB-1).